The primary structure comprises 458 residues: tRNA modification GTPase MnmE (458 aa).

Residues arginine 22, glutamate 84, and arginine 123 each contribute to the (6S)-5-formyl-5,6,7,8-tetrahydrofolate site. The region spanning 220 to 379 (GIATAIIGRP…LEKAIADLFF (160 aa)) is the TrmE-type G domain. Asparagine 230 is a binding site for K(+). Residues 230–235 (NVGKSS), 249–255 (TDIAGTT), and 274–277 (DTAG) contribute to the GTP site. Residue serine 234 coordinates Mg(2+). Threonine 249, isoleucine 251, and threonine 254 together coordinate K(+). A Mg(2+)-binding site is contributed by threonine 255. Lysine 458 provides a ligand contact to (6S)-5-formyl-5,6,7,8-tetrahydrofolate.

The protein belongs to the TRAFAC class TrmE-Era-EngA-EngB-Septin-like GTPase superfamily. TrmE GTPase family. As to quaternary structure, homodimer. Heterotetramer of two MnmE and two MnmG subunits. It depends on K(+) as a cofactor.

Its subcellular location is the cytoplasm. Exhibits a very high intrinsic GTPase hydrolysis rate. Involved in the addition of a carboxymethylaminomethyl (cmnm) group at the wobble position (U34) of certain tRNAs, forming tRNA-cmnm(5)s(2)U34. The sequence is that of tRNA modification GTPase MnmE from Bacillus cereus (strain ZK / E33L).